The primary structure comprises 249 residues: Flavin-dependent thymidylate synthase (249 aa).

The 218-residue stretch at 8-225 folds into the ThyX domain; it reads VKVKLLEYTP…PNLFKYSGPS (218 aa). FAD is bound by residues Ser62, 86-88, and Gln94; that span reads RHR. DUMP-binding positions include 83 to 86, 94 to 98, and Arg164; these read QLVR and QQSQR. A ThyX motif motif is present at residues 86-96; the sequence is RHRIASYSQQS. FAD is bound by residues 180-182 and Asn186; that span reads NAR. Arg191 is a binding site for dUMP. The active-site Involved in ionization of N3 of dUMP, leading to its activation is Arg191.

This sequence belongs to the thymidylate synthase ThyX family. Homotetramer. It depends on FAD as a cofactor.

It catalyses the reaction dUMP + (6R)-5,10-methylene-5,6,7,8-tetrahydrofolate + NADPH + H(+) = dTMP + (6S)-5,6,7,8-tetrahydrofolate + NADP(+). It participates in pyrimidine metabolism; dTTP biosynthesis. Catalyzes the reductive methylation of 2'-deoxyuridine-5'-monophosphate (dUMP) to 2'-deoxythymidine-5'-monophosphate (dTMP) while utilizing 5,10-methylenetetrahydrofolate (mTHF) as the methyl donor, and NADPH and FADH(2) as the reductant. The polypeptide is Flavin-dependent thymidylate synthase (Clostridium tetani (strain Massachusetts / E88)).